The sequence spans 162 residues: Superoxide dismutase [Cu-Zn] (162 aa).

The first 20 residues, 1-20, serve as a signal peptide directing secretion; the sequence is MNKSGIILIGTILFSSMAIA. The Cu cation site is built by histidine 66, histidine 68, and histidine 83. Cysteine 73 and cysteine 158 are disulfide-bonded. Residues histidine 83, histidine 92, histidine 100, and aspartate 103 each contribute to the Zn(2+) site. A Cu cation-binding site is contributed by histidine 137.

Belongs to the Cu-Zn superoxide dismutase family. In terms of assembly, homodimer. Requires Cu cation as cofactor. Zn(2+) is required as a cofactor.

The protein resides in the periplasm. It carries out the reaction 2 superoxide + 2 H(+) = H2O2 + O2. In terms of biological role, destroys radicals which are normally produced within the cells and which are toxic to biological systems. The polypeptide is Superoxide dismutase [Cu-Zn] (sodC) (Legionella pneumophila).